The following is a 440-amino-acid chain: MSTPTPKVGFVSLGCPKALVDSERILTQLRMEGYEVVPTYEDADVVVVNTCGFIDSAKAESLEVIGEAIAENGKVIVTGCMGVEEHTIRDVHPSVLAVTGPQQYEQVVTAVHEVVPPKTEHNPLVDLVPPQGVKLTPRHYAYLKISEGCNHSCSFCIIPSMRGKLVSRPVGDVLSEAERLVKAGVKELLVISQDTSAYGVDLKYKTDFWNGQPVKTRMKELCEALSSMGVWVRLHYVYPYPNVDDVIPLMAAGKLLPYLDIPFQHASPKVLKAMKRPAFEDKTLARIKQWREICPELTIRSTFIVGFPGETEEDFQYLLDWLTEAQLDRVGCFQYSPVEGAPANELGLEPVPDEVKQDRWERFMAHQQAISAARLQLKVGKEIEVLIDEVDEQGAVGRSWADAPEIDGNVFVDSDELKPGDKVRVRITDADEYDLWAELV.

Positions 6-116 (PKVGFVSLGC…VVTAVHEVVP (111 aa)) constitute an MTTase N-terminal domain. Positions 15, 51, 80, 149, 153, and 156 each coordinate [4Fe-4S] cluster. The region spanning 135-373 (LTPRHYAYLK…MAHQQAISAA (239 aa)) is the Radical SAM core domain. The TRAM domain occupies 376-440 (QLKVGKEIEV…DEYDLWAELV (65 aa)).

This sequence belongs to the methylthiotransferase family. RimO subfamily. The cofactor is [4Fe-4S] cluster.

The protein localises to the cytoplasm. The enzyme catalyses L-aspartate(89)-[ribosomal protein uS12]-hydrogen + (sulfur carrier)-SH + AH2 + 2 S-adenosyl-L-methionine = 3-methylsulfanyl-L-aspartate(89)-[ribosomal protein uS12]-hydrogen + (sulfur carrier)-H + 5'-deoxyadenosine + L-methionine + A + S-adenosyl-L-homocysteine + 2 H(+). Catalyzes the methylthiolation of an aspartic acid residue of ribosomal protein uS12. The protein is Ribosomal protein uS12 methylthiotransferase RimO of Pseudomonas aeruginosa (strain UCBPP-PA14).